Here is a 205-residue protein sequence, read N- to C-terminus: Basonuclin zinc finger protein homolog (205 aa).

2 C2H2-type zinc fingers span residues 107–130 (VACDICSKSFCDKGALKIHTSAVH) and 135–164 (HTCTVTGCGKQFSSRRSRNRHSSNNNPKLH). Residues 145–168 (QFSSRRSRNRHSSNNNPKLHMPES) form a disordered region.

As to expression, expressed in the VA and VB motor neurons and at lower levels in the SABV neuron pair.

The protein localises to the nucleus. Probable transcription factor. Involved in motor neuron fate determination and maintenance, acting as a transcriptional repressor to counteract gene activation by transcription factor unc-3 in a subset of motor neurons. Required throughout development to repress transcription by unc-3, probably acting by binding to specific promoter elements. Represses expression of DA and DB motor neuron-specific effector genes, such as unc-129 and unc-53, in VA and VB motor neurons. The protein is Basonuclin zinc finger protein homolog of Caenorhabditis elegans.